The primary structure comprises 477 residues: Argininosuccinate lyase (477 aa).

The segment covering Met-1 to Gly-18 has biased composition (polar residues). Positions Met-1 to Gly-21 are disordered.

The protein belongs to the lyase 1 family. Argininosuccinate lyase subfamily.

The protein localises to the cytoplasm. It catalyses the reaction 2-(N(omega)-L-arginino)succinate = fumarate + L-arginine. Its pathway is amino-acid biosynthesis; L-arginine biosynthesis; L-arginine from L-ornithine and carbamoyl phosphate: step 3/3. This Acinetobacter baylyi (strain ATCC 33305 / BD413 / ADP1) protein is Argininosuccinate lyase.